A 708-amino-acid polypeptide reads, in one-letter code: ATP-dependent RNA helicase laf-1 (708 aa).

The span at 1–21 (MESNQSNNGGSGNAALNRGGR) shows a compositional bias: low complexity. The disordered stretch occupies residues 1–191 (MESNQSNNGG…RGTSKWENRG (191 aa)). Positions 48-70 (GAGGGGYRRGGGNSGGGGGGGYD) are enriched in gly residues. 2 stretches are compositionally biased toward basic and acidic residues: residues 72 to 83 (GYNDNRDDRDNR) and 90 to 99 (GRDRNYEDRG). Residues 100-123 (YNGGGGGGGNRGYNNNRGGGGGGY) are compositionally biased toward gly residues. The Q motif motif lies at 231-259 (SLFSDLSLHEWIEENIKTAGYDRPTPVQK). A Helicase ATP-binding domain is found at 262–453 (IPALQGGRDL…QDFLKENYVF (192 aa)). 275-282 (AQTGSGKT) serves as a coordination point for ATP. The DEAD box signature appears at 397 to 400 (DEAD). Positions 465–626 (NIMQKIVWVE…ELPDWLEGMS (162 aa)) constitute a Helicase C-terminal domain. A disordered region spans residues 623-708 (EGMSGDMRSG…RAQPQQDWWS (86 aa)). Gly residues-rich tracts occupy residues 630–647 (RSGG…GQRF) and 656–692 (GGSG…GGGR). The span at 699–708 (RAQPQQDWWS) shows a compositional bias: polar residues.

Belongs to the DEAD box helicase family. DDX3/DED1 subfamily. Binds RNA as a monomer at low laf-1 concentrations and as a dimer at high laf-1 concentrations. Expressed in the germline and soma of young adult hermaphrodites.

The protein resides in the cytoplasm. The protein localises to the cytoplasmic granule. It localises to the nucleus. Its subcellular location is the stress granule. It is found in the inflammasome. The protein resides in the cell membrane. The protein localises to the cell projection. It localises to the lamellipodium. The catalysed reaction is ATP + H2O = ADP + phosphate + H(+). In terms of biological role, multifunctional ATP-dependent RNA helicase. Plays a role in RNA remodeling, but is not required for RNA unwinding. Binds to RNA in a concentration-dependent manner to stimulate annealing between two complementary strands of RNA. This process is also dependent upon ATP; ATP reduces binding to RNA and subsequently diminishes RNA annealing. Involved in many cellular processes, which do not necessarily require its ATPase/helicase catalytic activities. Involved in the regulation of transcription and translation initiation. Involved in innate immunity. Involved in both stress and inflammatory responses. Promotes liquid-liquid phase separation of P granules, which is a process important for intracellular organization and stress granule assembly. Required for embryonic development. Plays a role in sexual cell fate determination by negatively regulating the translation of the sex determining protein tra-2. May play a protective role in the response to heat and oxidative stress. May negatively regulate extrinsic apoptotic signaling pathway via death domain receptors. May be involved in mitotic chromosome segregation. This chain is ATP-dependent RNA helicase laf-1, found in Caenorhabditis elegans.